The chain runs to 285 residues: Pantothenate synthetase (285 aa).

30-37 (MGNLHAGH) is an ATP binding site. Histidine 37 (proton donor) is an active-site residue. (R)-pantoate is bound at residue glutamine 61. Glutamine 61 contributes to the beta-alanine binding site. 149–152 (GEKD) provides a ligand contact to ATP. Glutamine 155 provides a ligand contact to (R)-pantoate. Residue 186–189 (LSSR) coordinates ATP.

The protein belongs to the pantothenate synthetase family. In terms of assembly, homodimer.

The protein localises to the cytoplasm. The catalysed reaction is (R)-pantoate + beta-alanine + ATP = (R)-pantothenate + AMP + diphosphate + H(+). It functions in the pathway cofactor biosynthesis; (R)-pantothenate biosynthesis; (R)-pantothenate from (R)-pantoate and beta-alanine: step 1/1. Functionally, catalyzes the condensation of pantoate with beta-alanine in an ATP-dependent reaction via a pantoyl-adenylate intermediate. The polypeptide is Pantothenate synthetase (Ectopseudomonas mendocina (strain ymp) (Pseudomonas mendocina)).